We begin with the raw amino-acid sequence, 39 residues long: Bacteriocin E50-52 (39 aa).

It localises to the secreted. Bacteriocin active against the Gram-negative bacteria C.jejuni, Y.enterocolitica and Y.pseudotuberculosis, and the Gram-positive bacteria S.aureus, S.epidermidis, L.monocytogenes and Listeria spp. When added to the drinking water of chickens, causes a decrease in the levels of C.jejuni and S.enteritidis in the ceca, and in the levels of S.enteritidis in the liver and spleen. This is Bacteriocin E50-52 from Enterococcus faecium (Streptococcus faecium).